A 469-amino-acid chain; its full sequence is Probable glycine dehydrogenase (decarboxylating) subunit 1 (469 aa).

The protein belongs to the GcvP family. N-terminal subunit subfamily. In terms of assembly, the glycine cleavage system is composed of four proteins: P, T, L and H. In this organism, the P 'protein' is a heterodimer of two subunits.

The enzyme catalyses N(6)-[(R)-lipoyl]-L-lysyl-[glycine-cleavage complex H protein] + glycine + H(+) = N(6)-[(R)-S(8)-aminomethyldihydrolipoyl]-L-lysyl-[glycine-cleavage complex H protein] + CO2. Functionally, the glycine cleavage system catalyzes the degradation of glycine. The P protein binds the alpha-amino group of glycine through its pyridoxal phosphate cofactor; CO(2) is released and the remaining methylamine moiety is then transferred to the lipoamide cofactor of the H protein. In Staphylothermus marinus (strain ATCC 43588 / DSM 3639 / JCM 9404 / F1), this protein is Probable glycine dehydrogenase (decarboxylating) subunit 1.